Here is a 276-residue protein sequence, read N- to C-terminus: Large ribosomal subunit protein uL2 (276 aa).

The interval 226–276 is disordered; sequence MNSVDHPHGGGEGKTSGGRHPVSPWGTPTKGYKTRSNKRTDKLILRHRNKG.

Belongs to the universal ribosomal protein uL2 family. Part of the 50S ribosomal subunit. Forms a bridge to the 30S subunit in the 70S ribosome.

Functionally, one of the primary rRNA binding proteins. Required for association of the 30S and 50S subunits to form the 70S ribosome, for tRNA binding and peptide bond formation. It has been suggested to have peptidyltransferase activity; this is somewhat controversial. Makes several contacts with the 16S rRNA in the 70S ribosome. In Vesicomyosocius okutanii subsp. Calyptogena okutanii (strain HA), this protein is Large ribosomal subunit protein uL2.